Reading from the N-terminus, the 364-residue chain is Phosphate acyltransferase (364 aa).

The segment at 343–364 (IRTSGRSGGKSKSSAAREDGAA) is disordered.

Belongs to the PlsX family. Homodimer. Probably interacts with PlsY.

The protein localises to the cytoplasm. The catalysed reaction is a fatty acyl-[ACP] + phosphate = an acyl phosphate + holo-[ACP]. Its pathway is lipid metabolism; phospholipid metabolism. Catalyzes the reversible formation of acyl-phosphate (acyl-PO(4)) from acyl-[acyl-carrier-protein] (acyl-ACP). This enzyme utilizes acyl-ACP as fatty acyl donor, but not acyl-CoA. This chain is Phosphate acyltransferase, found in Novosphingobium aromaticivorans (strain ATCC 700278 / DSM 12444 / CCUG 56034 / CIP 105152 / NBRC 16084 / F199).